A 31-amino-acid chain; its full sequence is PGAGSQEERMQGQMEGQDFSHEERFLSMVRE.

2 stretches are compositionally biased toward basic and acidic residues: residues 1–10 (PGAGSQEERM) and 18–31 (DFSHEERFLSMVRE). The segment at 1–31 (PGAGSQEERMQGQMEGQDFSHEERFLSMVRE) is disordered.

Heterodimer; disulfide-linked. In terms of processing, disulfide bonds.

Its function is as follows. Has antifungal activity against C.gloeosporioides but not against B.cinerea and Fusarium sp. or against various yeasts. Has no antibacterial activity. The protein is Antifungal protein 1 of Passiflora alata (Winged-stem passion flower).